A 504-amino-acid chain; its full sequence is One cut domain family member 2 (504 aa).

4 disordered regions span residues 29–95 (LGTL…GTAA), 166–189 (KFHHPHPHHHPHHHHHHHHQRLSG), 274–332 (EQHL…QLEE), and 485–504 (WQDDLSTGGSSSTSSTCTKA). Positions 35 to 56 (PAGGGSGGGGGGGGGGGGGGPG) are enriched in gly residues. The span at 168–186 (HHPHPHHHPHHHHHHHHQR) shows a compositional bias: basic residues. Positions 324-410 (VATSGQLEEI…QRMSALRLAA (87 aa)) form a DNA-binding region, CUT. The homeobox DNA-binding region spans 426-485 (QKKSRLVFTDLQRRTLFAIFKENKRPSKEMQITISQQLGLELTTVSNFFMNARRRSLEKW). The segment covering 490 to 504 (STGGSSSTSSTCTKA) has biased composition (low complexity).

This sequence belongs to the CUT homeobox family.

The protein resides in the nucleus. Transcriptional activator. Activates the transcription of a number of liver genes such as HNF3B. The protein is One cut domain family member 2 (ONECUT2) of Homo sapiens (Human).